Consider the following 526-residue polypeptide: Berberine bridge enzyme-like 11 (526 aa).

An N-terminal signal peptide occupies residues 1–21 (MEKLLIICMLLISVLVATSQS). Cys-31 and Cys-94 are oxidised to a cystine. Residues Asn-52, Asn-136, Asn-273, and Asn-482 are each glycosylated (N-linked (GlcNAc...) asparagine). One can recognise an FAD-binding PCMH-type domain in the interval 72-247 (TTPKPIAIIT…MGYKIRLVPV (176 aa)). The 6-(S-cysteinyl)-8alpha-(pros-histidyl)-FAD (His-Cys) cross-link spans 109–171 (HDFEGLSYTS…NVLGFPAGLC (63 aa)).

It belongs to the oxygen-dependent FAD-linked oxidoreductase family. FAD serves as cofactor. The FAD cofactor is bound via a bicovalent 6-S-cysteinyl, 8alpha-N1-histidyl FAD linkage.

It localises to the secreted. The protein localises to the cell wall. This chain is Berberine bridge enzyme-like 11, found in Arabidopsis thaliana (Mouse-ear cress).